Consider the following 341-residue polypeptide: Anthranilate phosphoribosyltransferase (341 aa).

Residues G80, 83–84 (GD), T88, 90–93 (NIST), 108–116 (KHGNRAVSS), and S120 contribute to the 5-phospho-alpha-D-ribose 1-diphosphate site. An anthranilate-binding site is contributed by G80. A Mg(2+)-binding site is contributed by S92. N111 contacts anthranilate. R166 provides a ligand contact to anthranilate. Positions 225 and 226 each coordinate Mg(2+).

This sequence belongs to the anthranilate phosphoribosyltransferase family. Homodimer. The cofactor is Mg(2+).

It catalyses the reaction N-(5-phospho-beta-D-ribosyl)anthranilate + diphosphate = 5-phospho-alpha-D-ribose 1-diphosphate + anthranilate. The protein operates within amino-acid biosynthesis; L-tryptophan biosynthesis; L-tryptophan from chorismate: step 2/5. In terms of biological role, catalyzes the transfer of the phosphoribosyl group of 5-phosphorylribose-1-pyrophosphate (PRPP) to anthranilate to yield N-(5'-phosphoribosyl)-anthranilate (PRA). This is Anthranilate phosphoribosyltransferase from Brevibacillus brevis (strain 47 / JCM 6285 / NBRC 100599).